Consider the following 626-residue polypeptide: Protein ALEX (626 aa).

4 disordered regions span residues 1-29, 173-223, 236-473, and 556-612; these read MMAR…LEPM, TTAH…AAHP, AAPG…APRS, and AASV…NNSR. Polar residues-rich tracts occupy residues 186-195 and 255-270; these read KSTAAASSRQ and GSTT…QSRL. The segment covering 281 to 312 has biased composition (basic and acidic residues); the sequence is QIRESEQRDPQLRRKQQRWKEPLMPRREEKYP. The span at 337-346 shows a compositional bias: low complexity; it reads QPILTPGQPQ. Residues 366-399 are compositionally biased toward pro residues; the sequence is IPTPGQPLPPQPIPTPGRPLTPQPIPTPGRPLTP. The segment covering 416–435 has biased composition (low complexity); sequence RLLRPGQPMSPQLRQTQGLP. Pro residues predominate over residues 436 to 445; it reads LPQPLLPPGQ. Residues 570 to 579 are compositionally biased toward basic residues; that stretch reads ALSRSRRYPW. Over residues 600–611 the composition is skewed to polar residues; the sequence is RRNAVSSSTNNS.

It belongs to the ALEX family. As to quaternary structure, interacts with the N-terminal region of the XLas isoforms of guanine nucleotide-binding protein G(s) subunit alpha.

It localises to the cell membrane. It is found in the cell projection. The protein localises to the ruffle. Its function is as follows. May inhibit the adenylyl cyclase-stimulating activity of guanine nucleotide-binding protein G(s) subunit alpha which is produced from the same locus in a different open reading frame. The chain is Protein ALEX from Homo sapiens (Human).